A 71-amino-acid chain; its full sequence is Large ribosomal subunit protein bL31 (71 aa).

Positions 16, 18, 36, and 39 each coordinate Zn(2+).

The protein belongs to the bacterial ribosomal protein bL31 family. Type A subfamily. As to quaternary structure, part of the 50S ribosomal subunit. It depends on Zn(2+) as a cofactor.

Binds the 23S rRNA. The polypeptide is Large ribosomal subunit protein bL31 (Petrotoga mobilis (strain DSM 10674 / SJ95)).